The primary structure comprises 141 residues: Auxin-responsive protein SAUR63 (141 aa).

The protein belongs to the ARG7 family. In terms of tissue distribution, expressed in hypocotyls, cotyledons, petioles, young rosette leaves, apical portion of inflorescence stems, stamen filaments and petals.

The protein resides in the cell membrane. May promote auxin-stimulated organ elongation, such as hypocotyls, stamen filaments and petals. The polypeptide is Auxin-responsive protein SAUR63 (Arabidopsis thaliana (Mouse-ear cress)).